A 131-amino-acid polypeptide reads, in one-letter code: Small ribosomal subunit protein eS24 (131 aa).

Position 1 is an N-acetylmethionine (methionine 1). Threonine 9 carries the post-translational modification Phosphothreonine. Lysine 37 participates in a covalent cross-link: Glycyl lysine isopeptide (Lys-Gly) (interchain with G-Cter in SUMO2). Basic and acidic residues predominate over residues 90–100; the sequence is RLARHGLYEKK. A disordered region spans residues 90–131; that stretch reads RLARHGLYEKKKTSRKQRKERKNRMKKVRGTAKANVGAGKKK. The segment covering 101–119 has biased composition (basic residues); sequence KTSRKQRKERKNRMKKVRG.

Belongs to the eukaryotic ribosomal protein eS24 family. In terms of assembly, component of the small ribosomal subunit. Part of the small subunit (SSU) processome, composed of more than 70 proteins and the RNA chaperone small nucleolar RNA (snoRNA) U3.

It is found in the cytoplasm. It localises to the nucleus. Its subcellular location is the nucleolus. In terms of biological role, component of the small ribosomal subunit. The ribosome is a large ribonucleoprotein complex responsible for the synthesis of proteins in the cell. Required for processing of pre-rRNA and maturation of 40S ribosomal subunits. Part of the small subunit (SSU) processome, first precursor of the small eukaryotic ribosomal subunit. During the assembly of the SSU processome in the nucleolus, many ribosome biogenesis factors, an RNA chaperone and ribosomal proteins associate with the nascent pre-rRNA and work in concert to generate RNA folding, modifications, rearrangements and cleavage as well as targeted degradation of pre-ribosomal RNA by the RNA exosome. This is Small ribosomal subunit protein eS24 (RPS24) from Pongo abelii (Sumatran orangutan).